Reading from the N-terminus, the 101-residue chain is Ubiquitin-related modifier 1 (101 aa).

1-thioglycine is present on glycine 101. A Glycyl lysine isopeptide (Gly-Lys) (interchain with K-? in acceptor proteins) cross-link involves residue glycine 101.

This sequence belongs to the URM1 family. Post-translationally, C-terminal thiocarboxylation occurs in 2 steps, it is first acyl-adenylated (-COAMP) via the hesA/moeB/thiF part of UBA4, then thiocarboxylated (-COSH) via the rhodanese domain of UBA4.

It localises to the cytoplasm. Its pathway is tRNA modification; 5-methoxycarbonylmethyl-2-thiouridine-tRNA biosynthesis. Functionally, acts as a sulfur carrier required for 2-thiolation of mcm(5)S(2)U at tRNA wobble positions of cytosolic tRNA(Lys), tRNA(Glu) and tRNA(Gln). Serves as sulfur donor in tRNA 2-thiolation reaction by being thiocarboxylated (-COSH) at its C-terminus by the MOCS3 homolog UBA4. The sulfur is then transferred to tRNA to form 2-thiolation of mcm(5)S(2)U. Prior mcm(5) tRNA modification by the elongator complex is required for 2-thiolation. Also acts as a ubiquitin-like protein (UBL) that is covalently conjugated via an isopeptide bond to lysine residues of target proteins such as AHP1. The thiocarboxylated form serves as substrate for conjugation and oxidative stress specifically induces the formation of UBL-protein conjugates. The chain is Ubiquitin-related modifier 1 from Scheffersomyces stipitis (strain ATCC 58785 / CBS 6054 / NBRC 10063 / NRRL Y-11545) (Yeast).